Here is a 157-residue protein sequence, read N- to C-terminus: Protein Smg homolog (157 aa).

Belongs to the Smg family.

The polypeptide is Protein Smg homolog (Idiomarina loihiensis (strain ATCC BAA-735 / DSM 15497 / L2-TR)).